The primary structure comprises 95 residues: Protein translocase subunit SecE (95 aa).

The segment at M1–P35 is disordered. Residues K22–P35 are compositionally biased toward basic residues. The helical transmembrane segment at V67–A87 threads the bilayer.

Belongs to the SecE/SEC61-gamma family. As to quaternary structure, component of the Sec protein translocase complex. Heterotrimer consisting of SecY, SecE and SecG subunits. The heterotrimers can form oligomers, although 1 heterotrimer is thought to be able to translocate proteins. Interacts with the ribosome. Interacts with SecDF, and other proteins may be involved. Interacts with SecA.

The protein localises to the cell membrane. Functionally, essential subunit of the Sec protein translocation channel SecYEG. Clamps together the 2 halves of SecY. May contact the channel plug during translocation. This Streptomyces griseus protein is Protein translocase subunit SecE.